Reading from the N-terminus, the 570-residue chain is MALRRLSLSRLSTESDSEDLPTFAFLKKEPSSTNRKPPQRAKNIVVVTSDSEASCPPSPGLKGPPCVPSAAGAPPQAGPVRVLSSSSEDEDVFVPLAERITCKLLTSKQLCPELSSSSLKTGLDGQNNASAPCDWKRQPWPKIPDVPLHGALEKSAANDEDSLLDDQCRQLPTYQATCRELAVSKTNSDRPLPKKRTKHIQTVQSGGSQGCWRPGQASRKENTPRQHERKKKAEMIKRLKAQRPEECLKHIVVVLDPVLLQMEGGGQLLGALQAMECSCVIEVQAIPRSITWRRRRTELVEDGDDWMEEPTILVLVLAEVFMSMAYNLKQASPSSTEKGKETLRSFVTDVTAKTGKALSLVIVDQEKCFRPQNPPRRRKSGMANKQAKAKHQQRQESSTGLMVSRADMEKALVDLQLYTEAQAWMVQSWKELADFTCAFTKAVAEAPFKKLRDQVTFSFFLEKDWAGGMKVDQSGRGLALIWRRQIQQLNRVSSEMASAIVDAYPSPQLLVQAYQRCFSEQERQNLLADIQVRRGEGVTATSRRVGPELSRRIYLQMTTAQPDLILDSVD.

Low complexity predominate over residues 1–14; it reads MALRRLSLSRLSTE. The tract at residues 1–86 is disordered; sequence MALRRLSLSR…AGPVRVLSSS (86 aa). Phosphoserine occurs at positions 12 and 15. Over residues 68-79 the composition is skewed to low complexity; sequence PSAAGAPPQAGP. 3 positions are modified to phosphoserine: serine 84, serine 85, and serine 87. Residue lysine 103 forms a Glycyl lysine isopeptide (Lys-Gly) (interchain with G-Cter in SUMO2) linkage. A Phosphoserine modification is found at serine 117. Over residues 118–130 the composition is skewed to polar residues; sequence SLKTGLDGQNNAS. Disordered regions lie at residues 118–147, 185–231, and 370–400; these read SLKTGLDGQNNASAPCDWKRQPWPKIPDVP, KTNS…ERKK, and RPQNPPRRRKSGMANKQAKAKHQQRQESSTG. Glycyl lysine isopeptide (Lys-Gly) (interchain with G-Cter in SUMO2) cross-links involve residues lysine 136 and lysine 142. Over residues 218–231 the composition is skewed to basic and acidic residues; sequence SRKENTPRQHERKK. The tract at residues 249-456 is nuclease-like domain; forms the post-nick DNA binding interface and is involved in DNA recognition and bending; the sequence is KHIVVVLDPV…PFKKLRDQVT (208 aa). A helix-hairpin-helix (2HhH); forms the pre-nick DNA binding interface and is involved in DNA recognition and bending region spans residues 476–570; that stretch reads RGLALIWRRQ…QPDLILDSVD (95 aa).

The protein belongs to the EME1/MMS4 family. In terms of assembly, part of the heterodimeric MUS81-EME1 complex. In terms of tissue distribution, weakly expressed in brain, heart, kidney, liver, lung, muscle, skin, small intestine, spleen, stomach, testis and thymus. Expressed in bone marrow. Also expressed in embryonic stem cells (ES cells).

It is found in the nucleus. The protein localises to the nucleolus. Non-catalytic subunit of the structure-specific, heterodimeric DNA endonuclease MUS81-EME1 which is involved in the maintenance of genome stability. In the complex, EME1 is required for DNA cleavage, participating in DNA recognition and bending. MUS81-EME1 cleaves 3'-flaps and nicked Holliday junctions, and exhibit limited endonuclease activity with 5' flaps and nicked double-stranded DNAs. Active during prometaphase, MUS81-EME1 resolves mitotic recombination intermediates, including Holliday junctions, which form during homologous recombination. The protein is Structure-specific endonuclease subunit EME1 of Mus musculus (Mouse).